The following is a 647-amino-acid chain: Sialidase (647 aa).

A signal peptide spans 1–37; that stretch reads MTANPYLRRLPRRRAVSFLLAPALAAATVAGASPAQA. Residue arginine 68 participates in substrate binding. The active-site Proton acceptor is the aspartate 92. BNR repeat units lie at residues 102–113, 175–186, and 239–250; these read RRSTDGGRTWGE, ATSTDGGLTWSH, and VYSDDHGRTWRA. The Nucleophile role is filled by glutamate 260. Arginine 276 serves as a coordination point for substrate. BNR repeat units lie at residues 287-298 and 348-359; these read AVSTDGGHSYGP and RMSCDDGQTWPV. Tyrosine 370 functions as the Nucleophile in the catalytic mechanism. The 151-residue stretch at 496-646 folds into the F5/8 type C domain; that stretch reads TFTVTVGLLD…AVAELEVEGQ (151 aa).

This sequence belongs to the glycosyl hydrolase 33 family.

The protein localises to the secreted. It catalyses the reaction Hydrolysis of alpha-(2-&gt;3)-, alpha-(2-&gt;6)-, alpha-(2-&gt;8)- glycosidic linkages of terminal sialic acid residues in oligosaccharides, glycoproteins, glycolipids, colominic acid and synthetic substrates.. To release sialic acids for use as carbon and energy sources for this non-pathogenic bacterium while in pathogenic microorganisms, sialidases have been suggested to be pathogenic factors. This Micromonospora viridifaciens protein is Sialidase (nedA).